Here is a 651-residue protein sequence, read N- to C-terminus: Sodium/potassium/calcium exchanger 2 (651 aa).

Residues 1–38 (MALCKKTVGSVLEEWCLNEPLFGCKRHQNVRKKLRLIR) lie on the Cytoplasmic side of the membrane. The helical transmembrane segment at 39–59 (IIGLLVSVVAISTFSLSISAF) threads the bilayer. Over 60–134 (FKMETHSTVL…DLFSLEERRK (75 aa)) the chain is Extracellular. The disordered stretch occupies residues 92–123 (QNEGSTPDSPTSMKHEAEHDNATEEHSKGEYP). Positions 93–103 (NEGSTPDSPTS) are enriched in polar residues. Basic and acidic residues predominate over residues 104-122 (MKHEAEHDNATEEHSKGEY). An N-linked (GlcNAc...) asparagine glycan is attached at N112. The helical transmembrane segment at 135-155 (GAVILHVIGMIYMFIALAIVC) threads the bilayer. Residues 156-179 (DEFFVPSLTVITEKLSISDDVAGA) are Cytoplasmic-facing. The stretch at 176–216 (VAGATFMAAGGSAPELFTSLIGVFISHSNVGIGTIVGSAVF) is one Alpha-1 repeat. The helical transmembrane segment at 180-200 (TFMAAGGSAPELFTSLIGVFI) threads the bilayer. At 201 to 206 (SHSNVG) the chain is on the extracellular side. The helical transmembrane segment at 207–227 (IGTIVGSAVFNILFVIGMCAL) threads the bilayer. Residues 228 to 245 (FSREILNLTWWPLFRDVS) lie on the Cytoplasmic side of the membrane. Residues 246 to 266 (FYIVDLILLIIFFLDNLIMWW) traverse the membrane as a helical segment. Residues 267–459 (ESLTLLTAYF…SLAWPDTPRK (193 aa)) lie on the Extracellular side of the membrane. The segment covering 304 to 322 (ATTGDAEGKSPTAGDKDDQ) has biased composition (basic and acidic residues). The disordered stretch occupies residues 304 to 338 (ATTGDAEGKSPTAGDKDDQTLTTKPRLQRGGSSAS). Residues 323 to 338 (TLTTKPRLQRGGSSAS) are compositionally biased toward polar residues. The helical transmembrane segment at 460-480 (QLTYLLVLPIVFPLWVSLPDV) threads the bilayer. Residues 481 to 487 (RNPRSRK) lie on the Cytoplasmic side of the membrane. The chain crosses the membrane as a helical span at residues 488-508 (FFPITFFGSISWIAFFSYLMV). Topologically, residues 509-523 (WWAHQVGETIGISEE) are extracellular. The helical transmembrane segment at 524 to 544 (IMGLTILAAGTSIPDLITSVI) threads the bilayer. An Alpha-2 repeat occupies 531–562 (AAGTSIPDLITSVIVARKGLGDMAVSSSVGSN). The Cytoplasmic portion of the chain corresponds to 545–562 (VARKGLGDMAVSSSVGSN). A helical transmembrane segment spans residues 563–583 (IFDITVGLPLPWLLYAVINNF). Residues 584-592 (SPVTVSSNG) are Extracellular-facing. A helical transmembrane segment spans residues 593–613 (LFCAIVLLFIMLLFVILSIAF). Topologically, residues 614-620 (CKWRMNK) are cytoplasmic. A helical transmembrane segment spans residues 621-641 (FLGFLMFGLYFVFLIVSVLLE). The Extracellular segment spans residues 642–651 (DKVIQCPVSI).

Belongs to the Ca(2+):cation antiporter (CaCA) (TC 2.A.19) family. SLC24A subfamily. In terms of tissue distribution, retinal cones. Found in the cone inner segment layer and in a subpopulation of ganglion cells.

Its subcellular location is the cell membrane. The catalysed reaction is Ca(2+)(out) + K(+)(out) + 4 Na(+)(in) = Ca(2+)(in) + K(+)(in) + 4 Na(+)(out). In terms of biological role, calcium, potassium:sodium antiporter that transports 1 Ca(2+) and 1 K(+) in exchange for 4 Na(+). Required for learming and memory by regulating neuronal Ca(2+), which is essential for the development of synaptic plasticity. The chain is Sodium/potassium/calcium exchanger 2 (SLC24A2) from Gallus gallus (Chicken).